The sequence spans 318 residues: Geranylfarnesyl diphosphate synthase (318 aa).

Residues K31, R34, and H65 each coordinate isopentenyl diphosphate. Mg(2+) is bound by residues D72 and D76. R81 is a binding site for an all-trans-polyprenyl diphosphate. R82 is an isopentenyl diphosphate binding site. 3 residues coordinate an all-trans-polyprenyl diphosphate: K166, T167, and Q204.

This sequence belongs to the FPP/GGPP synthase family. As to quaternary structure, homodimer. It depends on Mg(2+) as a cofactor.

It catalyses the reaction isopentenyl diphosphate + (2E,6E,10E)-geranylgeranyl diphosphate = (2E,6E,10E,14E)-geranylfarnesyl diphosphate + diphosphate. Functionally, probably involved in biosynthesis of the precursor for C25 (sesterterpanyl chain) moiety of C25-C25 diether (2,3-di-O-sesterterpanyl-sn-glycero) membrane lipid. Catalyzes the condensation of isopentenyl pyrophosphate with the allylic pyrophosphates to yield all-trans geranylfarnesyl diphosphate (GFPP). Geranylgeranyl diphosphate (GGPP) is the preferred substrate, however methylallyl diphosphate (DMAPP), farnesyl diphosphate (FPP) and geranyl diphosphate (GPP) can also be used as allylic substrate. This Aeropyrum pernix protein is Geranylfarnesyl diphosphate synthase (fgs).